Reading from the N-terminus, the 482-residue chain is tRNA sulfurtransferase (482 aa).

Positions 61 to 165 constitute a THUMP domain; it reads LAIRDALTRI…DDRLLLIKGR (105 aa). ATP is bound by residues 183 to 184, Lys265, Gly287, and Gln296; that span reads LI. Residues Cys344 and Cys456 are joined by a disulfide bond. Positions 404–482 constitute a Rhodanese domain; the sequence is FGPNDVILDI…GFNNVKVYRP (79 aa). Cys456 acts as the Cysteine persulfide intermediate in catalysis.

This sequence belongs to the ThiI family.

It is found in the cytoplasm. The enzyme catalyses [ThiI sulfur-carrier protein]-S-sulfanyl-L-cysteine + a uridine in tRNA + 2 reduced [2Fe-2S]-[ferredoxin] + ATP + H(+) = [ThiI sulfur-carrier protein]-L-cysteine + a 4-thiouridine in tRNA + 2 oxidized [2Fe-2S]-[ferredoxin] + AMP + diphosphate. It catalyses the reaction [ThiS sulfur-carrier protein]-C-terminal Gly-Gly-AMP + S-sulfanyl-L-cysteinyl-[cysteine desulfurase] + AH2 = [ThiS sulfur-carrier protein]-C-terminal-Gly-aminoethanethioate + L-cysteinyl-[cysteine desulfurase] + A + AMP + 2 H(+). The protein operates within cofactor biosynthesis; thiamine diphosphate biosynthesis. Functionally, catalyzes the ATP-dependent transfer of a sulfur to tRNA to produce 4-thiouridine in position 8 of tRNAs, which functions as a near-UV photosensor. Also catalyzes the transfer of sulfur to the sulfur carrier protein ThiS, forming ThiS-thiocarboxylate. This is a step in the synthesis of thiazole, in the thiamine biosynthesis pathway. The sulfur is donated as persulfide by IscS. The chain is tRNA sulfurtransferase from Escherichia fergusonii (strain ATCC 35469 / DSM 13698 / CCUG 18766 / IAM 14443 / JCM 21226 / LMG 7866 / NBRC 102419 / NCTC 12128 / CDC 0568-73).